A 160-amino-acid polypeptide reads, in one-letter code: Dihydrofolate reductase (160 aa).

Residues 2–159 (TFSLIVATTL…YDCRFLILTR (158 aa)) enclose the DHFR domain. Ile-6 lines the substrate pocket. NADP(+) is bound by residues Ala-8 and 14-20 (VIGKDNQ). Asp-28 is a binding site for substrate. 46–47 (KT) is a binding site for NADP(+). Positions 53 and 58 each coordinate substrate. Residues 64-65 (SR) and 96-103 (GGGELFKQ) contribute to the NADP(+) site. Thr-114 provides a ligand contact to substrate.

The protein belongs to the dihydrofolate reductase family.

It catalyses the reaction (6S)-5,6,7,8-tetrahydrofolate + NADP(+) = 7,8-dihydrofolate + NADPH + H(+). The protein operates within cofactor biosynthesis; tetrahydrofolate biosynthesis; 5,6,7,8-tetrahydrofolate from 7,8-dihydrofolate: step 1/1. Its function is as follows. Key enzyme in folate metabolism. Catalyzes an essential reaction for de novo glycine and purine synthesis, and for DNA precursor synthesis. The polypeptide is Dihydrofolate reductase (folA) (Haemophilus influenzae (strain ATCC 51907 / DSM 11121 / KW20 / Rd)).